The following is a 310-amino-acid chain: N-acetyl-gamma-glutamyl-phosphate reductase (310 aa).

Cys-117 is an active-site residue.

The protein belongs to the NAGSA dehydrogenase family. Type 2 subfamily.

It localises to the cytoplasm. The enzyme catalyses N-acetyl-L-glutamate 5-semialdehyde + phosphate + NADP(+) = N-acetyl-L-glutamyl 5-phosphate + NADPH + H(+). It participates in amino-acid biosynthesis; L-arginine biosynthesis; N(2)-acetyl-L-ornithine from L-glutamate: step 3/4. Functionally, catalyzes the NADPH-dependent reduction of N-acetyl-5-glutamyl phosphate to yield N-acetyl-L-glutamate 5-semialdehyde. The polypeptide is N-acetyl-gamma-glutamyl-phosphate reductase (Brucella abortus (strain S19)).